The following is a 99-amino-acid chain: Co-chaperonin GroES (99 aa).

This sequence belongs to the GroES chaperonin family. In terms of assembly, heptamer of 7 subunits arranged in a ring. Interacts with the chaperonin GroEL.

The protein resides in the cytoplasm. In terms of biological role, together with the chaperonin GroEL, plays an essential role in assisting protein folding. The GroEL-GroES system forms a nano-cage that allows encapsulation of the non-native substrate proteins and provides a physical environment optimized to promote and accelerate protein folding. GroES binds to the apical surface of the GroEL ring, thereby capping the opening of the GroEL channel. This Methylacidiphilum infernorum (isolate V4) (Methylokorus infernorum (strain V4)) protein is Co-chaperonin GroES.